The chain runs to 466 residues: ATP synthase subunit beta (466 aa).

152-159 (GGAGVGKT) lines the ATP pocket.

The protein belongs to the ATPase alpha/beta chains family. F-type ATPases have 2 components, CF(1) - the catalytic core - and CF(0) - the membrane proton channel. CF(1) has five subunits: alpha(3), beta(3), gamma(1), delta(1), epsilon(1). CF(0) has three main subunits: a(1), b(2) and c(9-12). The alpha and beta chains form an alternating ring which encloses part of the gamma chain. CF(1) is attached to CF(0) by a central stalk formed by the gamma and epsilon chains, while a peripheral stalk is formed by the delta and b chains.

The protein resides in the cell inner membrane. It catalyses the reaction ATP + H2O + 4 H(+)(in) = ADP + phosphate + 5 H(+)(out). Functionally, produces ATP from ADP in the presence of a proton gradient across the membrane. The catalytic sites are hosted primarily by the beta subunits. The protein is ATP synthase subunit beta of Helicobacter acinonychis (strain Sheeba).